We begin with the raw amino-acid sequence, 281 residues long: Endochitinase B (281 aa).

The first 33 residues, 1-33 (MAMAKAGAPRVSAAQLVTLGLSLLCAVAGPAAA), serve as a signal peptide directing secretion. A Chitin-binding type-1 domain is found at 34–68 (QNCGCQPNVCCSKFGYCGTTDEYCGDGCQSGPCRS). Intrachain disulfides connect cysteine 36–cysteine 44, cysteine 38–cysteine 50, cysteine 43–cysteine 57, and cysteine 61–cysteine 66. A hinge region (Gly-rich) region spans residues 69-78 (GGGGSSGGGG). Residues 79-281 (ANVASVVTGS…GVDPGPNLTC (203 aa)) are catalytic. An intrachain disulfide couples cysteine 101 to cysteine 150. Residue glutamate 145 is the Proton donor of the active site. Residue asparagine 156 is glycosylated (N-linked (GlcNAc...) asparagine). 2 disulfides stabilise this stretch: cysteine 162/cysteine 171 and cysteine 249/cysteine 281. A glycan (N-linked (GlcNAc...) asparagine) is linked at asparagine 278.

It belongs to the glycosyl hydrolase 19 family. Chitinase class I subfamily.

It localises to the secreted. The enzyme catalyses Random endo-hydrolysis of N-acetyl-beta-D-glucosaminide (1-&gt;4)-beta-linkages in chitin and chitodextrins.. Defense against chitin-containing fungal pathogens. Its action is countered by fungal polyglycine hydrolases, that cleaves within its hinge region (Gly-rich) to disrupt chitin-binding. This is Endochitinase B from Zea mays (Maize).